The sequence spans 191 residues: Imidazoleglycerol-phosphate dehydratase (191 aa).

Belongs to the imidazoleglycerol-phosphate dehydratase family.

It is found in the cytoplasm. It carries out the reaction D-erythro-1-(imidazol-4-yl)glycerol 3-phosphate = 3-(imidazol-4-yl)-2-oxopropyl phosphate + H2O. The protein operates within amino-acid biosynthesis; L-histidine biosynthesis; L-histidine from 5-phospho-alpha-D-ribose 1-diphosphate: step 6/9. This Methanosarcina barkeri (strain Fusaro / DSM 804) protein is Imidazoleglycerol-phosphate dehydratase.